The primary structure comprises 687 residues: Adhesion G-protein coupled receptor G1 (687 aa).

Positions 1-25 (MTAQSLLQMTLFLLSLLFLVQGAHG) are cleaved as a signal peptide. 26–33 (RGHREDFR) is a heparin binding site. Over 26-402 (RGHREDFRFC…VEVDAVHKHY (377 aa)) the chain is Extracellular. 2 disulfides stabilise this stretch: C35-C91 and C121-C177. 3 N-linked (GlcNAc...) asparagine glycosylation sites follow: N39, N148, and N171. 190 to 200 (LKHPQKASRRP) lines the heparin pocket. The GAIN-B domain maps to 224–395 (DTVSFEEDRI…AVLMVSSVEV (172 aa)). Residues N234, N303, N324, and N341 are each glycosylated (N-linked (GlcNAc...) asparagine). 2 disulfides stabilise this stretch: C346-C377 and C366-C379. The GPS stretch occupies residues 346–395 (CVFWVEDPTLSSPGHWSSAGCETVRRETQTSCFCNHLTYFAVLMVSSVEV). The segment at 384–397 (YFAVLMVSSVEVDA) is stachel. A helical membrane pass occupies residues 403-423 (LSLLSYVGCVISALACVVTIA). Residues 424-442 (AYLCSRRKPRDYTIKVHMN) are Cytoplasmic-facing. Residues 443–463 (LLLAVFLLDMSFLLSEPVALT) traverse the membrane as a helical segment. At 464 to 470 (GSEAGCR) the chain is on the extracellular side. Residues 471–491 (AGAIFLHFSLLACLSWMGLEG) form a helical membrane-spanning segment. The Cytoplasmic segment spans residues 492–512 (YNLYRLVVEVFGTYVPGYLLK). The chain crosses the membrane as a helical span at residues 513–533 (LSAMGWGFPIFLVTLVALVDV). The Extracellular portion of the chain corresponds to 534 to 570 (DNYGPIILAVHRTPESVIYPSMCWIRDSLVSYVTNLG). A helical transmembrane segment spans residues 571-591 (LFSLVFLFNMAMLGTMVVQIL). Over 592–603 (RLRPHTQKWSHV) the chain is Cytoplasmic. Residues 604–624 (LTLLGLSLVLGLPWALIFFSF) traverse the membrane as a helical segment. Over 625-630 (ASGTFQ) the chain is Extracellular. The chain crosses the membrane as a helical span at residues 631 to 651 (LVVLYLFSIITSFQGFLIFIW). Residues 652 to 687 (YWSMRLQARGGPSPLKSNSDSARLPISSGSTSSSRI) lie on the Cytoplasmic side of the membrane. Positions 664-687 (SPLKSNSDSARLPISSGSTSSSRI) are disordered. Low complexity predominate over residues 678–687 (SSGSTSSSRI).

Belongs to the G-protein coupled receptor 2 family. LN-TM7 subfamily. In terms of assembly, heterodimer of 2 chains generated by proteolytic processing; the large extracellular N-terminal fragment (ADGRG1 NT) and the membrane-bound C-terminal fragment (ADGRG1-CT) predominantly remain associated and non-covalently linked. ADGRG1 NT self-associates in a trans-trans manner; the homophilic interaction enhances receptor signaling. Interacts with TGM2. Interacts with heparin; leading to the reduction of ADGRG1 shedding. Interacts with COL3A1. Part of a GPCR-tetraspanin complex at least consisting of ADGRG1, CD81, eventually CD9, and GNA11 in which CD81 is enhancing the association of ADGRG1 with GNA11. Post-translationally, autoproteolytically cleaved into 2 fragments; the large extracellular N-terminal fragment (ADGRG1 NT) and the membrane-bound C-terminal fragment (ADGRG1 CT) predominantly remain associated and non-covalently linked. Shedding to yield the secreted ADGRG1 N-terminal fragment seems to involve metalloprotease(s). Ubiquitinated. Undergoes polyubiquitination upon activation.

Its subcellular location is the cell membrane. The protein resides in the secreted. It is found in the membrane raft. Its activity is regulated as follows. Forms a heterodimer of 2 chains generated by proteolytic processing that remain associated through non-covalent interactions mediated by the GAIN-B domain. In the inactivated receptor, the Stachel sequence (also named stalk) is embedded in the GAIN-B domain, where it adopts a beta-strand conformation. On activation, the Stachel moves into the 7 transmembrane region and adopts a twisted hook-shaped configuration that forms contacts within the receptor, leading to coupling of a G-alpha protein, which activates signaling. The cleaved GAIN-B and N-terminal domains can then dissociate from the rest of the receptor. In terms of biological role, adhesion G-protein coupled receptor (aGPCR) for steroid hormone 17alpha-hydroxypregnenolone (17-OH), which is involved in cell adhesion and cell-cell interactions. Ligand binding causes a conformation change that triggers signaling via guanine nucleotide-binding proteins (G proteins) and modulates the activity of downstream effectors, such as RhoA pathway. ADGRG1 is coupled to G(12) and/or G(13) G proteins (GNA12 and GNA13, respectively) and mediates the activation Rho small GTPases. Acts as a potent suppressor of ferroptosis: binding to 17-OH-binding initiates signaling that down-regulates CD36 and alleviates ferroptosis-induced liver injury. Ligand-binding also induces cell adhesion activity via association with proteins such as collagen III/COL3A1 and TGM2. Mediates cell matrix adhesion in developing neurons and hematopoietic stem cells. Involved in cortical development, specifically in maintenance of the pial basement membrane integrity and in cortical lamination: association with COL3A1 in the developing brain inhibits neuronal migration via activation of the RhoA pathway. Together with TGM2, acts as a regulator of myelination and myelin repair in oligodendrocyte precursor cells. Acts as a hemostatic sensor of shear force: G protein-coupled receptor signaling is activated in response to shear force in platelets, promoting G(13) G protein signaling, and platelet shape change and aggregation in a COL3A1-dependent manner. Acts as an inhibitor of VEGFA production thereby inhibiting angiogenesis through a signaling pathway mediated by PRKCA. Plays a role in the maintenance of hematopoietic stem cells in bone marrow niche. Plays an essential role in testis development. The sequence is that of Adhesion G-protein coupled receptor G1 (ADGRG1) from Pongo pygmaeus (Bornean orangutan).